The primary structure comprises 673 residues: Pesticin receptor (673 aa).

A signal peptide spans Met1–Ala22. Positions Ser30 to Ser37 match the TonB box motif. In terms of domain architecture, TBDR plug spans Ser41 to Gln155. The 513-residue stretch at Thr160–Phe672 folds into the TBDR beta-barrel domain. Residues Gln657–Phe673 carry the TonB C-terminal box motif.

It belongs to the TonB-dependent receptor family.

Its subcellular location is the cell outer membrane. Functionally, receptor for the bacteriocin pesticin and for the siderophore yersiniabactin. This is Pesticin receptor (fyuA) from Yersinia enterocolitica.